The primary structure comprises 185 residues: ATP synthase subunit delta (185 aa).

Belongs to the ATPase delta chain family. F-type ATPases have 2 components, F(1) - the catalytic core - and F(0) - the membrane proton channel. F(1) has five subunits: alpha(3), beta(3), gamma(1), delta(1), epsilon(1). CF(0) has four main subunits: a(1), b(1), b'(1) and c(10-14). The alpha and beta chains form an alternating ring which encloses part of the gamma chain. F(1) is attached to F(0) by a central stalk formed by the gamma and epsilon chains, while a peripheral stalk is formed by the delta, b and b' chains.

Its subcellular location is the cellular thylakoid membrane. Its function is as follows. F(1)F(0) ATP synthase produces ATP from ADP in the presence of a proton or sodium gradient. F-type ATPases consist of two structural domains, F(1) containing the extramembraneous catalytic core and F(0) containing the membrane proton channel, linked together by a central stalk and a peripheral stalk. During catalysis, ATP synthesis in the catalytic domain of F(1) is coupled via a rotary mechanism of the central stalk subunits to proton translocation. In terms of biological role, this protein is part of the stalk that links CF(0) to CF(1). It either transmits conformational changes from CF(0) to CF(1) or is implicated in proton conduction. This chain is ATP synthase subunit delta, found in Acaryochloris marina (strain MBIC 11017).